A 347-amino-acid chain; its full sequence is sn-glycerol-3-phosphate import ATP-binding protein UgpC 1 (347 aa).

One can recognise an ABC transporter domain in the interval 4 to 234 (IELIDLKKNY…PETVFVAGFI (231 aa)). 36–43 (GPSGCGKS) contributes to the ATP binding site.

The protein belongs to the ABC transporter superfamily. sn-glycerol-3-phosphate importer (TC 3.A.1.1.3) family. As to quaternary structure, the complex is composed of two ATP-binding proteins (UgpC), two transmembrane proteins (UgpA and UgpE) and a solute-binding protein (UgpB).

Its subcellular location is the cell inner membrane. It carries out the reaction sn-glycerol 3-phosphate(out) + ATP + H2O = sn-glycerol 3-phosphate(in) + ADP + phosphate + H(+). Its function is as follows. Part of the ABC transporter complex UgpBAEC involved in sn-glycerol-3-phosphate (G3P) import. Responsible for energy coupling to the transport system. This Rhizobium etli (strain ATCC 51251 / DSM 11541 / JCM 21823 / NBRC 15573 / CFN 42) protein is sn-glycerol-3-phosphate import ATP-binding protein UgpC 1.